A 283-amino-acid chain; its full sequence is Tumor necrosis factor receptor superfamily member 14 (283 aa).

An N-terminal signal peptide occupies residues 1 to 38; the sequence is MEPPGDWGPPPWRSTPKTDVLRLVLYLTFLGAPCYAPA. Residues 39–202 are Extracellular-facing; sequence LPSCKEDEYP…GAGTSSSHWV (164 aa). 8 cysteine pairs are disulfide-bonded: C42–C53, C54–C67, C57–C75, C78–C93, C96–C111, C99–C119, C121–C138, and C127–C135. TNFR-Cys repeat units follow at residues 42–75, 78–119, and 121–162; these read CKED…GTVC, CPPG…NAVC, and CSPG…DTLC. A glycan (N-linked (GlcNAc...) asparagine) is linked at N110. A glycan (N-linked (GlcNAc...) asparagine) is linked at N173. Residues 203 to 223 form a helical membrane-spanning segment; the sequence is WWFLSGSLVIVIVCSTVGLII. The Cytoplasmic segment spans residues 224 to 283; sequence CVKRRKPRGDVVKVIVSVQRKRQEAEGEATVIEALQAPPDVTTVAVEETIPSFTGRSPNH. At S240 the chain carries Phosphoserine.

It belongs to the tumor necrosis factor receptor superfamily. In terms of assembly, interacts with TRAF2, TRAF3 and TRAF5. Interacts (via CRD1/TNFR-Cys 1) with CD160; this interaction is direct. Interacts with LTA and TNFSF14. Interacts (via CRD1/TNFR-Cys 1) in cis and trans with BTLA; the cis interactions inhibits the trans interactions. As to quaternary structure, (Microbial infection) Interacts with herpes simplex virus 1/HHV-1 envelope glycoprotein D. (Microbial infection) Interacts with herpes simplex virus 2/HHV-2 envelope glycoprotein D. In terms of processing, N-glycosylated. In terms of tissue distribution, widely expressed, with the highest expression in lung, spleen and thymus. Expressed in a subpopulation of B cells and monocytes. Expressed in naive T cells.

The protein localises to the cell membrane. Functionally, receptor for four distinct ligands: The TNF superfamily members TNFSF14/LIGHT and homotrimeric LTA/lymphotoxin-alpha and the immunoglobulin superfamily members BTLA and CD160, altogether defining a complex stimulatory and inhibitory signaling network. Signals via the TRAF2-TRAF3 E3 ligase pathway to promote immune cell survival and differentiation. Participates in bidirectional cell-cell contact signaling between antigen presenting cells and lymphocytes. In response to ligation of TNFSF14/LIGHT, delivers costimulatory signals to T cells, promoting cell proliferation and effector functions. Interacts with CD160 on NK cells, enhancing IFNG production and anti-tumor immune response. In the context of bacterial infection, acts as a signaling receptor on epithelial cells for CD160 from intraepithelial lymphocytes, triggering the production of antimicrobial proteins and pro-inflammatory cytokines. Upon binding to CD160 on activated CD4+ T cells, down-regulates CD28 costimulatory signaling, restricting memory and alloantigen-specific immune response. May interact in cis (on the same cell) or in trans (on other cells) with BTLA. In cis interactions, appears to play an immune regulatory role inhibiting in trans interactions in naive T cells to maintain a resting state. In trans interactions, can predominate during adaptive immune response to provide survival signals to effector T cells. In terms of biological role, (Microbial infection) Acts as a receptor for Herpes simplex virus 1/HHV-1. (Microbial infection) Acts as a receptor for Herpes simplex virus 2/HHV-2. In Homo sapiens (Human), this protein is Tumor necrosis factor receptor superfamily member 14.